The primary structure comprises 594 residues: Frizzled and smoothened-like protein A (594 aa).

The N-terminal stretch at 1 to 22 is a signal peptide; sequence MVDIRKSLFFIIFFIFYNYVNS. At 23–248 the chain is on the extracellular side; the sequence is QKAINSDAFC…NEWYQFKDLT (226 aa). An FZ domain is found at 27–173; that stretch reads NSDAFCQKKT…SNYDLQCLNI (147 aa). 2 cysteine pairs are disulfide-bonded: cysteine 32–cysteine 98 and cysteine 41–cysteine 91. Residues asparagine 55 and asparagine 106 are each glycosylated (N-linked (GlcNAc...) asparagine). An intrachain disulfide couples cysteine 117 to cysteine 170. N-linked (GlcNAc...) asparagine glycosylation is found at asparagine 182, asparagine 189, asparagine 195, and asparagine 206. The helical transmembrane segment at 249–269 threads the bilayer; the sequence is TVTGVISFVCIFFNIFIYGFL. Topologically, residues 270–277 are cytoplasmic; the sequence is NKKHDRHT. A helical transmembrane segment spans residues 278–298; the sequence is IGILCLSFSLWCCMLSDLIVA. The Extracellular segment spans residues 299–329; sequence SSPDYSLVCPEPGRFARIHDSRCVANGIIFQ. A helical membrane pass occupies residues 330-350; sequence WGAVCTTMFWSAMAIDLYLVI. The Cytoplasmic portion of the chain corresponds to 351–361; it reads KKLSLPAFTVK. Residues 362-382 traverse the membrane as a helical segment; that stretch reads YFVAAIFTLALLFTTVPLAWD. Over 383–403 the chain is Extracellular; sequence DYGYGFGGVGCWIMSNSVQNG. A helical membrane pass occupies residues 404–424; it reads CFWIPMLICLLIGAVSICLII. The Cytoplasmic segment spans residues 425-448; sequence YEIVKVFKNVGRSGISIILANARL. The helical transmembrane segment at 449–469 threads the bilayer; that stretch reads FGIVSFIFIEYIYLFVYHFWV. The Extracellular segment spans residues 470-507; it reads QENTEKFTQNITDWVICVQTTGSSDGCPLPKAVPYATQ. A glycan (N-linked (GlcNAc...) asparagine) is linked at asparagine 479. Residues 508 to 528 traverse the membrane as a helical segment; the sequence is FIFLFFLRLLGIEVCIFYGIN. The Cytoplasmic segment spans residues 529–594; that stretch reads SRSKNIILES…SKNGGDDDDL (66 aa).

Belongs to the G-protein coupled receptor Fz/Smo family.

The protein localises to the membrane. The chain is Frizzled and smoothened-like protein A (fslA) from Dictyostelium discoideum (Social amoeba).